Reading from the N-terminus, the 461-residue chain is Photosynthetic NDH subunit of subcomplex B 1, chloroplastic (461 aa).

Residues 1–44 constitute a chloroplast transit peptide; the sequence is MASSLPLLPKPISPFFKTPPFSTSKPLVFLNFQTRLTSRSSDVS. The disordered stretch occupies residues 66–90; sequence NEYGSLFADGKQDEDPRPPDNPDNP. Residues 75–85 are compositionally biased toward basic and acidic residues; that stretch reads GKQDEDPRPPD.

As to quaternary structure, part of the chloroplast NDH complex, composed of a mixture of chloroplast and nucleus encoded subunits. Component of the NDH subcomplex B, at least composed of PnsB1, PnsB2, PnsB3, PnsB4 and PnsB5.

The protein localises to the plastid. The protein resides in the chloroplast thylakoid membrane. Its function is as follows. NDH shuttles electrons from NAD(P)H:plastoquinone, via FMN and iron-sulfur (Fe-S) centers, to quinones in the photosynthetic chain and possibly in a chloroplast respiratory chain. The immediate electron acceptor for the enzyme in this species is believed to be plastoquinone. Couples the redox reaction to proton translocation, and thus conserves the redox energy in a proton gradient. The polypeptide is Photosynthetic NDH subunit of subcomplex B 1, chloroplastic (Arabidopsis thaliana (Mouse-ear cress)).